The following is a 366-amino-acid chain: Pyruvate dehydrogenase E1 component subunit beta, mitochondrial (366 aa).

Residues 1–33 (MFSRLPTSLARNVARRAPTSFVRPSAAAAALRF) constitute a mitochondrion transit peptide. Glu95 provides a ligand contact to thiamine diphosphate. 4 residues coordinate K(+): Ala196, Ile197, Asp199, and Asn201.

Pyruvate dehydrogenase (E1) is a tetramer of 2 alpha and 2 beta subunits. Eukaryotic pyruvate dehydrogenase (PDH) complexes are organized as a core consisting of the oligomeric dihydrolipoamide acetyl-transferase (E2), around which are arranged multiple copies of pyruvate dehydrogenase (E1), dihydrolipoamide dehydrogenase (E3) and protein X (E3BP) bound by non-covalent bonds. Requires thiamine diphosphate as cofactor.

It localises to the mitochondrion matrix. The catalysed reaction is N(6)-[(R)-lipoyl]-L-lysyl-[protein] + pyruvate + H(+) = N(6)-[(R)-S(8)-acetyldihydrolipoyl]-L-lysyl-[protein] + CO2. The pyruvate dehydrogenase complex catalyzes the overall conversion of pyruvate to acetyl-CoA and CO(2). This chain is Pyruvate dehydrogenase E1 component subunit beta, mitochondrial (PDB1), found in Saccharomyces cerevisiae (strain ATCC 204508 / S288c) (Baker's yeast).